The chain runs to 523 residues: Pituitary adenylate cyclase-activating polypeptide type I receptor (523 aa).

A signal peptide spans 1 to 19 (MARVLQLSLTALLLPVAIA). Residues 20 to 151 (MHSDCIFKKE…SGDQDYYYLS (132 aa)) are Extracellular-facing. 3 cysteine pairs are disulfide-bonded: C33–C62, C53–C117, and C76–C133. N-linked (GlcNAc...) asparagine glycans are attached at residues N47, N59, and N116. Residues 124 to 138 (EPFPHYFDACGFDDY) are important for ADCYAP1/PACAP ligand binding and specificity. The interval 124 to 138 (EPFPHYFDACGFDDY) is important for ligand binding and specificity. A helical membrane pass occupies residues 152–176 (VKALYTVGYSTSLATLTTAMVILCR). Residues 177–186 (FRKLHCTRNF) are Cytoplasmic-facing. A helical transmembrane segment spans residues 187-207 (IHMNLFVSFMLRAISVFIKDW). Over 208 to 222 (ILYAEQDSSHCFVST) the chain is Extracellular. The helical transmembrane segment at 223–248 (VECKAVMVFFHYCVVSNYFWLFIEGL) threads the bilayer. C225 and C295 are joined by a disulfide. The Cytoplasmic segment spans residues 249 to 266 (YLFTLLVETFFPERRYFY). A helical membrane pass occupies residues 267–289 (WYTIIGWGTPTVCVTVWAVLRLY). At 290–301 (FDDAGCWDMNDS) the chain is on the extracellular side. Residues 302–328 (TALWWVIKGPVVGSIMVNFVLFIGIII) form a helical membrane-spanning segment. Topologically, residues 329 to 346 (ILVQKLQSPDMGGNESSI) are cytoplasmic. A helical transmembrane segment spans residues 347-429 (YLTNLRLRVP…HYTVFAFSPE (83 aa)). The Extracellular portion of the chain corresponds to 430-434 (NVSKR). The chain crosses the membrane as a helical span at residues 435–458 (ERLVFELGLGSFQGFVVAVLYCFL). The Cytoplasmic segment spans residues 459–523 (NGEVQAEIKR…SSLPADNLAT (65 aa)). A phosphoserine mark is found at S489 and S502.

The protein belongs to the G-protein coupled receptor 2 family. Interacts with maxadilan, a vasodilator peptide from Lutzomyia longipalpis saliva; the interaction results in ADCYAP1R1 activation. In terms of tissue distribution, hypothalamus, anterior pituitary, adrenal medulla, testicular germ cells.

Its subcellular location is the cell membrane. In terms of biological role, g protein-coupled receptor activated by the neuropeptide pituitary adenylate cyclase-activating polypeptide (ADCYAP1/PACAP). Binds both PACAP27 and PACAP38 bioactive peptides. Ligand binding causes a conformation change that triggers signaling via guanine nucleotide-binding proteins (G proteins) and modulates the activity of downstream effectors. Activates cAMP-dependent pathway. May regulate the release of adrenocorticotropin, luteinizing hormone, growth hormone, prolactin, epinephrine, and catecholamine. May play a role in spermatogenesis and sperm motility. Causes smooth muscle relaxation and secretion in the gastrointestinal tract. This is Pituitary adenylate cyclase-activating polypeptide type I receptor from Rattus norvegicus (Rat).